The sequence spans 520 residues: MKPSSASRFSLTFSHFLTLYCLLTQTHVAQGSHQWQSPIKTVVVLVLENRSFDHLLGWMKNSVNPTINGVTGQECNPVPNSTQTICFTSDAEFVDPDPGHSFEAVEQQVFGSGPGQIPSMMGFVEQALSMPGNLSETVMKGFRPEAVPVYAELVKEFAVFDRWFSSIPGPTQPNRLFVYSATSHGSTSHVKKQLAQGYPQKTIFDSLHSNDIDFGIYFQNIPTTLFYRNLRQLKYIFNLHQYDLKFKKDAAKGKLPSLTVIEPRYFDLKGLPANDDHPSHDVANGQKLVKEVYEALRSSPQWNETLLVITYDEHGGFYDHVKTPYVGIPNPDGNTGPAPGFFKFDRLGVRVPTIMVSPWIQKGTVVSEAKGPTESSEYEHSSIPATIKKLFNLSSNFLTHRDAWAATFEDVVSHLTTPRTDCPMTLPEVAPMRATEPKEDAALSEFQGEVVQLAAVLNGDHFLSSFPEEIGKKMTVKQAHEYVKGATSRFIRASKEAMKLGADKSAIVDMRSSLTTRPHN.

Positions 1–31 (MKPSSASRFSLTFSHFLTLYCLLTQTHVAQG) are cleaved as a signal peptide.

It belongs to the bacterial phospholipase C family. Expressed in roots, leaves, stems, flowers and siliques.

Its subcellular location is the secreted. This Arabidopsis thaliana (Mouse-ear cress) protein is Non-specific phospholipase C6 (NPC6).